A 34-amino-acid chain; its full sequence is Non-toxic venom protein (34 aa).

One can recognise an LCN-type CS-alpha/beta domain in the interval 1–34 (KEGYPTNSEGCKITXLFNDPYCKGXCINLSTQAD).

In terms of tissue distribution, expressed by the venom gland.

It is found in the secreted. Functionally, does not cause symptoms of intoxication, paralysis or death in insects (A.domestica). The polypeptide is Non-toxic venom protein (Rhopalurus junceus (Caribbean blue scorpion)).